The chain runs to 397 residues: Glutamyl-tRNA reductase (397 aa).

Substrate-binding positions include 47–50 (TCGR), Ser-98, 103–105 (ETD), and Gln-109. Cys-48 (nucleophile) is an active-site residue. NADP(+) is bound at residue 177–182 (GAGAVG).

It belongs to the glutamyl-tRNA reductase family. In terms of assembly, homodimer.

The enzyme catalyses (S)-4-amino-5-oxopentanoate + tRNA(Glu) + NADP(+) = L-glutamyl-tRNA(Glu) + NADPH + H(+). It participates in porphyrin-containing compound metabolism; protoporphyrin-IX biosynthesis; 5-aminolevulinate from L-glutamyl-tRNA(Glu): step 1/2. Catalyzes the NADPH-dependent reduction of glutamyl-tRNA(Glu) to glutamate 1-semialdehyde (GSA). This is Glutamyl-tRNA reductase from Pyrobaculum aerophilum (strain ATCC 51768 / DSM 7523 / JCM 9630 / CIP 104966 / NBRC 100827 / IM2).